A 485-amino-acid chain; its full sequence is Glycogen synthase (485 aa).

Lys-20 serves as a coordination point for ADP-alpha-D-glucose.

It belongs to the glycosyltransferase 1 family. Bacterial/plant glycogen synthase subfamily.

It carries out the reaction [(1-&gt;4)-alpha-D-glucosyl](n) + ADP-alpha-D-glucose = [(1-&gt;4)-alpha-D-glucosyl](n+1) + ADP + H(+). It functions in the pathway glycan biosynthesis; glycogen biosynthesis. Functionally, synthesizes alpha-1,4-glucan chains using ADP-glucose. This is Glycogen synthase from Vibrio parahaemolyticus serotype O3:K6 (strain RIMD 2210633).